Consider the following 1159-residue polypeptide: ATP-dependent helicase/deoxyribonuclease subunit B (1159 aa).

The UvrD-like helicase ATP-binding domain maps to 1–275 (MEFNTYIGRA…TYFNTFYRYN (275 aa)). 8 to 15 (GRAGTGKS) lines the ATP pocket. A UvrD-like helicase C-terminal domain is found at 269–583 (NTFYRYNNDD…SIGTMDLAKV (315 aa)). Positions 784, 1112, 1115, and 1121 each coordinate [4Fe-4S] cluster.

This sequence belongs to the helicase family. AddB/RexB type 1 subfamily. As to quaternary structure, heterodimer of AddA and AddB. Mg(2+) is required as a cofactor. [4Fe-4S] cluster serves as cofactor.

In terms of biological role, the heterodimer acts as both an ATP-dependent DNA helicase and an ATP-dependent, dual-direction single-stranded exonuclease. Recognizes the chi site generating a DNA molecule suitable for the initiation of homologous recombination. The AddB subunit has 5' -&gt; 3' nuclease activity but not helicase activity. The sequence is that of ATP-dependent helicase/deoxyribonuclease subunit B from Staphylococcus epidermidis (strain ATCC 35984 / DSM 28319 / BCRC 17069 / CCUG 31568 / BM 3577 / RP62A).